A 190-amino-acid chain; its full sequence is Peptidyl-tRNA hydrolase (190 aa).

Tyr14 contributes to the tRNA binding site. His19 serves as the catalytic Proton acceptor. TRNA-binding residues include Tyr64, Asn66, and Asn112.

Belongs to the PTH family. As to quaternary structure, monomer.

It localises to the cytoplasm. It catalyses the reaction an N-acyl-L-alpha-aminoacyl-tRNA + H2O = an N-acyl-L-amino acid + a tRNA + H(+). Hydrolyzes ribosome-free peptidyl-tRNAs (with 1 or more amino acids incorporated), which drop off the ribosome during protein synthesis, or as a result of ribosome stalling. Functionally, catalyzes the release of premature peptidyl moieties from peptidyl-tRNA molecules trapped in stalled 50S ribosomal subunits, and thus maintains levels of free tRNAs and 50S ribosomes. In Pelodictyon phaeoclathratiforme (strain DSM 5477 / BU-1), this protein is Peptidyl-tRNA hydrolase.